The chain runs to 405 residues: Probable tRNA sulfurtransferase (405 aa).

The region spanning 60–165 (AEVDKRLKKV…QDAVYISNQL (106 aa)) is the THUMP domain. ATP contacts are provided by residues 183–184 (ML), 208–209 (HF), Arg-265, Gly-287, and Gln-296.

Belongs to the ThiI family.

It localises to the cytoplasm. It carries out the reaction [ThiI sulfur-carrier protein]-S-sulfanyl-L-cysteine + a uridine in tRNA + 2 reduced [2Fe-2S]-[ferredoxin] + ATP + H(+) = [ThiI sulfur-carrier protein]-L-cysteine + a 4-thiouridine in tRNA + 2 oxidized [2Fe-2S]-[ferredoxin] + AMP + diphosphate. It catalyses the reaction [ThiS sulfur-carrier protein]-C-terminal Gly-Gly-AMP + S-sulfanyl-L-cysteinyl-[cysteine desulfurase] + AH2 = [ThiS sulfur-carrier protein]-C-terminal-Gly-aminoethanethioate + L-cysteinyl-[cysteine desulfurase] + A + AMP + 2 H(+). Its pathway is cofactor biosynthesis; thiamine diphosphate biosynthesis. Functionally, catalyzes the ATP-dependent transfer of a sulfur to tRNA to produce 4-thiouridine in position 8 of tRNAs, which functions as a near-UV photosensor. Also catalyzes the transfer of sulfur to the sulfur carrier protein ThiS, forming ThiS-thiocarboxylate. This is a step in the synthesis of thiazole, in the thiamine biosynthesis pathway. The sulfur is donated as persulfide by IscS. The polypeptide is Probable tRNA sulfurtransferase (Lactobacillus helveticus (strain DPC 4571)).